Reading from the N-terminus, the 240-residue chain is DNA repair protein RecO (240 aa).

This sequence belongs to the RecO family.

In terms of biological role, involved in DNA repair and RecF pathway recombination. The sequence is that of DNA repair protein RecO from Actinobacillus pleuropneumoniae serotype 5b (strain L20).